The primary structure comprises 29 residues: Cyclotide mech-7 (29 aa).

Residues 1–29 (GIPICGETCTIGTCNTPGCTCSWPVCTRD) constitute a cross-link (cyclopeptide (Gly-Asp)). 3 cysteine pairs are disulfide-bonded: C5–C19, C9–C21, and C14–C26.

This is a cyclic peptide. In terms of processing, contains 3 disulfide bonds.

Its function is as follows. Probably participates in a plant defense mechanism (Potential). Binds to and induces leakage in phospholipd membranes, particularly ones containing 1-palmitoyl-2-oleophosphatidylethanolamine (POPE). This chain is Cyclotide mech-7, found in Melicytus chathamicus (Chatham Island mahoe).